The chain runs to 432 residues: Putative O-antigen transporter (432 aa).

12 helical membrane-spanning segments follow: residues 14-34, 47-67, 90-110, 134-154, 164-184, 189-209, 234-254, 271-291, 305-325, 334-354, 376-396, and 400-420; these read IIAA…LVSV, AVFT…IGIG, AAVH…FFLS, FIAS…KILF, IINA…HYLM, ITFA…IYIS, GFLI…IVMS, IFGL…PVCA, IIFL…LFIY, IIAN…LAVY, ILWL…WYFA, and GIVG…FWGL.

It is found in the cell inner membrane. It functions in the pathway bacterial outer membrane biogenesis; LPS O-antigen biosynthesis. Functionally, may be involved in the translocation process of the nascent O-polysaccharide molecules and/or its ligation to lipid A core units. The chain is Putative O-antigen transporter (rfbX) from Salmonella typhi.